The following is a 495-amino-acid chain: MNSTPVLEMRNIAKAFGKFYALKGVDLTVYPSENHALMGENGAGKSTLMKVLAGAYTATSGEILIDGKPFHIRTQKDALSAGITLIYQEMQLAPNLSVAENISLGSELSHGGLVQRKEMLVQAQKVIDRLGAQFNASDKVMTLTIAEQQQVEIARALHRNSRILVMDEPTAALSSRETHRLFELIMRLRDEGMAIIYISHRMAEVYELSDRVSVLRDGQYVGSLTRDNLNAGELVRMMVGRPLSDLFNKERDIPLGKARLNVHHLTDGGKVQPSSLLVRSGKIVGLAGLVGAGRSELAQLIFGVRKATGGMIEVDGEPVVIHSPREAIDLGIGFLTENRKEQGLFLEMAAAENITMATLERDARWEAQTISDDAIKLLNIRVPHAQVRAGGLSGGNQQKMLISRWVAIGPRILLLDEPTRGVDVGAKSEIYRIMNEMARKGVAILMISSELPEIVGMSDRVYVMHEGSIAGELNGKNITQENIMTLATGVNDAHS.

2 consecutive ABC transporter domains span residues leucine 7–proline 242 and glutamate 250–asparagine 491. Glycine 39–serine 46 is an ATP binding site.

This sequence belongs to the ABC transporter superfamily. Ribose importer (TC 3.A.1.2.1) family. In terms of assembly, the complex is composed of an ATP-binding protein (RbsA), two transmembrane proteins (RbsC) and a solute-binding protein (RbsB).

The protein localises to the cell inner membrane. It carries out the reaction D-ribose(out) + ATP + H2O = D-ribose(in) + ADP + phosphate + H(+). In terms of biological role, part of the ABC transporter complex RbsABC involved in ribose import. Responsible for energy coupling to the transport system. The chain is Ribose import ATP-binding protein RbsA from Shigella dysenteriae serotype 1 (strain Sd197).